The following is a 448-amino-acid chain: MDTRKVKSSSRDAVNCLPDEILAKILSYLPTKRAVSTSLISKRWRNLFALMIQLFESQHHLYLDDSDLVYPEEGKGEMKDVQESFGDFVDKTLTDCNTIKKLSILCPLKCCAHKDIDQWLHHAMERGVVDLDMRFKMGFTPTQNEWPCNVFTIKTLVKLTFRIEVGQNKMPYCPKGVLPVLKSLFLHAIWFACERLCHSMLPGCPILEELFLHDLRGYRYNDSPNFSISHKTLKRLTVHFNNSFELGRPMQFDTPSLLYLEYSGFAPCRYSRTSYLNSLVEVKLDVHIRHECNTHMHLSPIIDWIGNVKTLSLSPASVKMMYSRCVELHVFSNLVKLYFESNEKEGWEVLPRLLNKSPKLETLVLKGLHCASDHGVCVDRNEVKVLEIYGFSGCGREVRQVKCLLREMQFLQVMKVEIDAHDDNKKLRVINHLLDLPKRPSKFHIQFL.

The 48-residue stretch at 11–58 folds into the F-box domain; sequence RDAVNCLPDEILAKILSYLPTKRAVSTSLISKRWRNLFALMIQLFESQ. LRR repeat units lie at residues 82–106, 185–214, 215–240, 310–341, and 342–367; these read QESF…SILC, FLHA…FLHD, LRGY…TVHF, TLSL…YFES, and NEKE…VLKG.

This Arabidopsis thaliana (Mouse-ear cress) protein is Putative F-box/LRR-repeat protein At5g25860.